A 255-amino-acid polypeptide reads, in one-letter code: MLKVAALYQFAPLPDFREVREPLRALCVGLSVKGTILLAGEGINGTVAGMPDAIDALAAELQTGTLFSGRLDNLELKFSQASVMPFARLKVRLKKEIVTLGDPATDPTRAVGIYVEPKDWNGLIAAPDTLLIDTRNAFEVAMGTFEGAVDPQLARFGEFKDFVAQKLDPDRHRRIAMFCTGGIRCEKASSYLLSRGFKEVYHLKGGILKYLEGIPESESCWRGECFVFDDRIALGHGLTESRRAGRLMDGAPGDD.

Residues 125–219 enclose the Rhodanese domain; the sequence is AAPDTLLIDT…YLEGIPESES (95 aa). C179 serves as the catalytic Cysteine persulfide intermediate.

It belongs to the TrhO family.

It carries out the reaction uridine(34) in tRNA + AH2 + O2 = 5-hydroxyuridine(34) in tRNA + A + H2O. In terms of biological role, catalyzes oxygen-dependent 5-hydroxyuridine (ho5U) modification at position 34 in tRNAs. The chain is tRNA uridine(34) hydroxylase from Nitrobacter hamburgensis (strain DSM 10229 / NCIMB 13809 / X14).